The chain runs to 295 residues: Methionine aminopeptidase (295 aa).

Position 62 (His-62) interacts with substrate. 3 residues coordinate a divalent metal cation: Asp-82, Asp-93, and His-153. His-161 serves as a coordination point for substrate. Residues Glu-187 and Glu-280 each contribute to the a divalent metal cation site.

In terms of assembly, monomer. The cofactor is Co(2+). Requires Zn(2+) as cofactor. It depends on Mn(2+) as a cofactor. Fe(2+) is required as a cofactor.

It carries out the reaction Release of N-terminal amino acids, preferentially methionine, from peptides and arylamides.. Functionally, removes the N-terminal methionine from nascent proteins. The N-terminal methionine is often cleaved when the second residue in the primary sequence is small and uncharged (Met-Ala-, Cys, Gly, Pro, Ser, Thr, or Val). This chain is Methionine aminopeptidase, found in Pyrococcus furiosus (strain ATCC 43587 / DSM 3638 / JCM 8422 / Vc1).